The sequence spans 472 residues: MVLNENDKEFVKKLFDSLDKDNNGKLTREEIKEGFFKLRIPSSEKDIESFLTNVDKDKDGSVSFKEFEDFTIENIKKLKIVFEELDTNKSGTLDIHEIEESIKKLNIPLYSEQELIRLFHRIDKNRDNQIDFNEWRELLVLLPNSNLQLIISFWKDSQILDAGFDNGGFIPPMVEKKEKASSLRNTITYMLAGSVAGFASRTSTAPLERVKIMCQLNHGKPISLISAFKACYKDGGIKGFFRGNLANIIKVSPESAVKFGTYEYVKKLFAENDCELTSAQRFISGSVAGVVSHTTLFPLEVVRLRLSAEIAGTYNGIFDCFKKIAISEKSIRPFYRGLGASITATIPHSGVNMMVYEFLKHKVIKMTGNEFPTAGQLLVCASTSSVCGQLVGYPFHVVKSRLITQGSSVNQEKYTGLFDGLTKIIKKEGPIGLYKGIVPSFMKSIPSHSITFIVYEGFKKAFDVNLKEKKHH.

The Mitochondrial intermembrane portion of the chain corresponds to 1 to 189 (MVLNENDKEF…ASSLRNTITY (189 aa)). 4 EF-hand domains span residues 6 to 41 (NDKE…LRIP), 42 to 70 (SSEK…FEDF), 73 to 108 (ENIK…LNIP), and 110 to 145 (YSEQ…LPNS). D19, D21, N23, K25, E30, D55, D57, D59, S61, E66, D86, N88, S90, T92, E97, D123, N125, D127, Q129, and E134 together coordinate Ca(2+). Solcar repeat units follow at residues 184–268 (RNTI…VKKL), 276–362 (LTSA…LKHK), and 375–461 (GQLL…FKKA). Residues 190–207 (MLAGSVAGFASRTSTAPL) traverse the membrane as a helical segment. Over 208-242 (ERVKIMCQLNHGKPISLISAFKACYKDGGIKGFFR) the chain is Mitochondrial matrix. The chain crosses the membrane as a helical span at residues 243-263 (GNLANIIKVSPESAVKFGTYE). At 264 to 281 (YVKKLFAENDCELTSAQR) the chain is on the mitochondrial intermembrane side. A helical transmembrane segment spans residues 282–302 (FISGSVAGVVSHTTLFPLEVV). Topologically, residues 303-330 (RLRLSAEIAGTYNGIFDCFKKIAISEKS) are mitochondrial matrix. Residues 331-351 (IRPFYRGLGASITATIPHSGV) form a helical membrane-spanning segment. Topologically, residues 352–377 (NMMVYEFLKHKVIKMTGNEFPTAGQL) are mitochondrial intermembrane. A helical membrane pass occupies residues 378 to 398 (LVCASTSSVCGQLVGYPFHVV). Residues 399–441 (KSRLITQGSSVNQEKYTGLFDGLTKIIKKEGPIGLYKGIVPSF) lie on the Mitochondrial matrix side of the membrane. The helical transmembrane segment at 442–462 (MKSIPSHSITFIVYEGFKKAF) threads the bilayer. Residues 463–472 (DVNLKEKKHH) are Mitochondrial intermembrane-facing.

The protein belongs to the mitochondrial carrier (TC 2.A.29) family.

Its subcellular location is the mitochondrion inner membrane. Calcium-dependent mitochondrial solute carrier. Mitochondrial solute carriers shuttle metabolites, nucleotides, and cofactors through the mitochondrial inner membrane. This Dictyostelium discoideum (Social amoeba) protein is Mitochondrial substrate carrier family protein C (mcfC).